A 301-amino-acid polypeptide reads, in one-letter code: Phosphatidylserine decarboxylase proenzyme (301 aa).

Catalysis depends on charge relay system; for autoendoproteolytic cleavage activity residues Asp117, His173, and Ser260. Residue Ser260 is the Schiff-base intermediate with substrate; via pyruvic acid; for decarboxylase activity of the active site. Ser260 carries the pyruvic acid (Ser); by autocatalysis modification.

Belongs to the phosphatidylserine decarboxylase family. PSD-B subfamily. Prokaryotic type II sub-subfamily. As to quaternary structure, heterodimer of a large membrane-associated beta subunit and a small pyruvoyl-containing alpha subunit. The cofactor is pyruvate. Post-translationally, is synthesized initially as an inactive proenzyme. Formation of the active enzyme involves a self-maturation process in which the active site pyruvoyl group is generated from an internal serine residue via an autocatalytic post-translational modification. Two non-identical subunits are generated from the proenzyme in this reaction, and the pyruvate is formed at the N-terminus of the alpha chain, which is derived from the carboxyl end of the proenzyme. The autoendoproteolytic cleavage occurs by a canonical serine protease mechanism, in which the side chain hydroxyl group of the serine supplies its oxygen atom to form the C-terminus of the beta chain, while the remainder of the serine residue undergoes an oxidative deamination to produce ammonia and the pyruvoyl prosthetic group on the alpha chain. During this reaction, the Ser that is part of the protease active site of the proenzyme becomes the pyruvoyl prosthetic group, which constitutes an essential element of the active site of the mature decarboxylase.

It localises to the cell membrane. It catalyses the reaction a 1,2-diacyl-sn-glycero-3-phospho-L-serine + H(+) = a 1,2-diacyl-sn-glycero-3-phosphoethanolamine + CO2. It functions in the pathway phospholipid metabolism; phosphatidylethanolamine biosynthesis; phosphatidylethanolamine from CDP-diacylglycerol: step 2/2. In terms of biological role, catalyzes the formation of phosphatidylethanolamine (PtdEtn) from phosphatidylserine (PtdSer). This is Phosphatidylserine decarboxylase proenzyme from Chlamydia muridarum (strain MoPn / Nigg).